Reading from the N-terminus, the 483-residue chain is Cytochrome P450 monooxygenase stcF (483 aa).

A heme-binding site is contributed by Cys-424.

It belongs to the cytochrome P450 family. It depends on heme as a cofactor.

The protein operates within mycotoxin biosynthesis; sterigmatocystin biosynthesis. Its function is as follows. Cytochrome P450 monooxygenase; part of the gene cluster that mediates the biosynthesis of sterigmatocystin (ST), a polyketide-derived furanocoumarin which is part of the most toxic and carcinogenic compounds among the known mycotoxins. The first step in the biosynthesis of sterigmatocystin is the production of hexanoate by the fatty acid synthase (FAS) units stcJ and stcK. The polyketide backbone is assembled by the non-reducing polyketide synthase stcA by condensation of the starter hexanoyl-CoA and 7 malonyl-CoA extender units followed by cyclization and release of norsolorinic acid. Norsolorinic acid is the first stable intermediate in the biosynthesis of sterigmatocystin and is converted into averantin (AVN) by the ketoreductase stcE which reduces the hexanoate ketone to an alcohol. Averantin is then oxidized into 5'-hydroxyaverantin (HAVN) by the cytochrome P450 monooxygenase stcF. 5'-hydroxyaverantin is further converted to 5'-oxyaverantin (OAVN) by the 5'-hydroxyaverantin dehydrogenase stcG. The next step is the conversion of OAVN into averufin (AVF) which is catalyzed by a yet to be identified enzyme. The cytochrome P450 monooxygenase stcB and the flavin-binding monooxygenase stcW are both required for the conversion of averufin to 1-hydroxyversicolorone. The esterase stcI probably catalyzes the formation of versiconal hemiacetal acetate from 1-hydroxyversicolorone. The oxydoreductase stcN then probably catalyzes the biosynthetic step from versiconal to versicolorin B (VERB). The next step is performed by the versicolorin B desaturase stcL to produce versicolorin A (VERA). The ketoreductase stcU and the cytochrome P450 monooxygenase stcS are involved in the conversion of versicolorin A to demethylsterigmatocystin. The Baeyer-Villiger oxidas stcQ and the reductase stcR might be involved in the biosynthetic step from versicolorin A to demethylsterigmatocystin. The final step in the biosynthesis of sterigmatocystin is the methylation of demethylsterigmatocystin catalyzed by the methyltransferase stcP. The chain is Cytochrome P450 monooxygenase stcF from Emericella nidulans (strain FGSC A4 / ATCC 38163 / CBS 112.46 / NRRL 194 / M139) (Aspergillus nidulans).